A 160-amino-acid polypeptide reads, in one-letter code: Putative 4-hydroxy-4-methyl-2-oxoglutarate aldolase (160 aa).

Substrate contacts are provided by residues Gly76 to Leu79 and Arg98. An a divalent metal cation-binding site is contributed by Asp99.

This sequence belongs to the class II aldolase/RraA-like family. In terms of assembly, homotrimer. A divalent metal cation is required as a cofactor.

It catalyses the reaction 4-hydroxy-4-methyl-2-oxoglutarate = 2 pyruvate. The enzyme catalyses oxaloacetate + H(+) = pyruvate + CO2. Catalyzes the aldol cleavage of 4-hydroxy-4-methyl-2-oxoglutarate (HMG) into 2 molecules of pyruvate. Also contains a secondary oxaloacetate (OAA) decarboxylase activity due to the common pyruvate enolate transition state formed following C-C bond cleavage in the retro-aldol and decarboxylation reactions. The sequence is that of Putative 4-hydroxy-4-methyl-2-oxoglutarate aldolase from Deinococcus radiodurans (strain ATCC 13939 / DSM 20539 / JCM 16871 / CCUG 27074 / LMG 4051 / NBRC 15346 / NCIMB 9279 / VKM B-1422 / R1).